The primary structure comprises 78 residues: Major outer membrane lipoprotein Lpp (78 aa).

An N-terminal signal peptide occupies residues Met1 to Gly20. A lipid anchor (N-palmitoyl cysteine) is attached at Cys21. Cys21 carries the S-diacylglycerol cysteine lipid modification. 2 consecutive repeats follow at residues Thr24–Ile34 and Asn38–Val48. Residues Val27–Ser75 adopt a coiled-coil conformation. Lys78 bears the N6-murein peptidoglycan lysine mark.

The protein belongs to the Lpp family. In terms of assembly, homotrimer.

Its subcellular location is the cell outer membrane. It is found in the secreted. The protein localises to the cell wall. Functionally, a highly abundant outer membrane lipoprotein that controls the distance between the inner and outer membranes. The only protein known to be covalently linked to the peptidoglycan network (PGN). Also non-covalently binds the PGN. The link between the cell outer membrane and PGN contributes to maintenance of the structural and functional integrity of the cell envelope, and maintains the correct distance between the PGN and the outer membrane. The polypeptide is Major outer membrane lipoprotein Lpp (Photorhabdus laumondii subsp. laumondii (strain DSM 15139 / CIP 105565 / TT01) (Photorhabdus luminescens subsp. laumondii)).